The following is a 442-amino-acid chain: tRNA pseudouridine(38/39) synthase (442 aa).

D151 serves as the catalytic Nucleophile. Y222 lines the substrate pocket.

The protein belongs to the tRNA pseudouridine synthase TruA family.

The protein resides in the nucleus. It catalyses the reaction uridine(38/39) in tRNA = pseudouridine(38/39) in tRNA. Functionally, formation of pseudouridines at positions 38 and 39 in the anticodon stem and loop of transfer RNAs. This Saccharomyces cerevisiae (strain ATCC 204508 / S288c) (Baker's yeast) protein is tRNA pseudouridine(38/39) synthase (DEG1).